Reading from the N-terminus, the 429-residue chain is Ribosomal RNA small subunit methyltransferase B (429 aa).

S-adenosyl-L-methionine is bound by residues 254–260 (CAAPGGK), aspartate 277, aspartate 303, and aspartate 322. Cysteine 375 acts as the Nucleophile in catalysis.

Belongs to the class I-like SAM-binding methyltransferase superfamily. RsmB/NOP family.

The protein resides in the cytoplasm. It carries out the reaction cytidine(967) in 16S rRNA + S-adenosyl-L-methionine = 5-methylcytidine(967) in 16S rRNA + S-adenosyl-L-homocysteine + H(+). Specifically methylates the cytosine at position 967 (m5C967) of 16S rRNA. The protein is Ribosomal RNA small subunit methyltransferase B of Cronobacter sakazakii (strain ATCC BAA-894) (Enterobacter sakazakii).